Consider the following 328-residue polypeptide: D-cysteine desulfhydrase (328 aa).

K51 is subject to N6-(pyridoxal phosphate)lysine.

Belongs to the ACC deaminase/D-cysteine desulfhydrase family. In terms of assembly, homodimer. The cofactor is pyridoxal 5'-phosphate.

It carries out the reaction D-cysteine + H2O = hydrogen sulfide + pyruvate + NH4(+) + H(+). Functionally, catalyzes the alpha,beta-elimination reaction of D-cysteine and of several D-cysteine derivatives. It could be a defense mechanism against D-cysteine. This Shigella flexneri serotype 5b (strain 8401) protein is D-cysteine desulfhydrase.